Here is a 303-residue protein sequence, read N- to C-terminus: MATTRYEPVAEIGVGAYGTVYKARDPHSGHFVALKSVRVPNGGAAGGGLPVSTVREVALLRRLEAFEHPNVVRLMDVCATSRTDRDIKVTLVFEHIDQDLRTYLDKAPPPGLPVETIKDLMRQFLSGLDFLHANCIVHRDLKPENILVTSNGTVKLADFGLARIYSYQMALTPVVVTLWYRAPEVLLQSTYATPVDMWSVGCIFAEMFRRKPLFCGNSEADQLGKIFDLIGLPPEDDWPREVSLPRGAFSPRGPRPVQSVVPEMEESGAQLLLEMLTFNPLKRISAFRALQHSYLHKEESDPE.

Ala2 is modified (N-acetylalanine). The 290-residue stretch at 6–295 (YEPVAEIGVG…AFRALQHSYL (290 aa)) folds into the Protein kinase domain. Residues 12 to 20 (IGVGAYGTV) and Lys35 contribute to the ATP site. The segment at 50 to 56 (PVSTVRE) is required for binding D-type cyclins. The active-site Proton acceptor is the Asp140. A Phosphothreonine; by CAK modification is found at Thr172. Ser300 bears the Phosphoserine mark.

This sequence belongs to the protein kinase superfamily. CMGC Ser/Thr protein kinase family. CDC2/CDKX subfamily. Component of the D-CDK4 complex, composed of CDK4 and some D-type G1 cyclin (CCND1, CCND2 or CCND3). Interacts directly in the complex with CCND1, CCND2 or CCND3. Interacts with SEI1 and ZNF655. Forms a ternary complex, cyclin D-CDK4-CDKN1B, involved in modulating CDK4 enzymatic activity. Interacts directly with CDKN1B (phosphorylated on 'Tyr-88' and 'Tyr-89'); the interaction allows assembly of the cyclin D-CDK4 complex, Thr-172 phosphorylation, nuclear translocation and enhances the cyclin D-CDK4 complex activity. CDK4 activity is either inhibited or enhanced depending on stoichiometry of complex. The non-tyrosine-phosphorylated form of CDKN1B prevents T-loop phosphorylation of CDK4 producing inactive CDK4. Interacts (unphosphorylated form) with CDK2. Also forms ternary complexes with CDKN1A or CDKN2A. Interacts directly with CDKN1A (via its N-terminal); the interaction promotes the assembly of the cyclin D-CDK4 complex, its nuclear translocation and promotes the cyclin D-dependent enzyme activity of CDK4. Interacts with CCND1; the interaction is prevented with the binding of CCND1 to INSM1 during cell cycle progression. Probably forms a complex composed of chaperones HSP90 and HSP70, co-chaperones CDC37, PPP5C, TSC1 and client protein TSC2, CDK4, AKT, RAF1 and NR3C1; this complex does not contain co-chaperones STIP1/HOP and PTGES3/p23. Interacts with CEBPA (when phosphorylated). Interacts with FNIP1 and FNIP2. Expressed in fetal and adult lung. Also expressed in brain, heart, liver, skeletal muscle and testes.

It is found in the cytoplasm. It localises to the nucleus. Its subcellular location is the nucleus membrane. The enzyme catalyses L-seryl-[protein] + ATP = O-phospho-L-seryl-[protein] + ADP + H(+). The catalysed reaction is L-threonyl-[protein] + ATP = O-phospho-L-threonyl-[protein] + ADP + H(+). Both phosphorylation at Thr-172 and binding of a D-type cyclin are necessary for enzymatic activity. Full activation of the cyclin-D-CDK4 complex appears to require other factors such as recruitment of the substrate via a substrate recruitment motif, and/or formation of the CDKN1B ternary complex. Inhibited by INK4 family members. In resting cells, the non-tyrosine-phosphorylated form of CDKN1B prevents phosphorylation at Thr-172 and inactivation, while, in proliferating cells, tyrosine phosphorylation of CDKN1B allows phosphorylation of Thr-172 of CDK4 and subsequent activation. Its function is as follows. Ser/Thr-kinase component of cyclin D-CDK4 (DC) complexes that phosphorylate and inhibit members of the retinoblastoma (RB) protein family including RB1 and regulate the cell-cycle during G(1)/S transition. Phosphorylation of RB1 allows dissociation of the transcription factor E2F from the RB/E2F complexes and the subsequent transcription of E2F target genes which are responsible for the progression through the G(1) phase. Hypophosphorylates RB1 in early G(1) phase. Cyclin D-CDK4 complexes are major integrators of various mitogenenic and antimitogenic signals. Also phosphorylates SMAD3 in a cell-cycle-dependent manner and represses its transcriptional activity. Component of the ternary complex, cyclin D/CDK4/CDKN1B, required for nuclear translocation and activity of the cyclin D-CDK4 complex. This is Cyclin-dependent kinase 4 (Cdk4) from Rattus norvegicus (Rat).